A 102-amino-acid polypeptide reads, in one-letter code: NADH-quinone oxidoreductase subunit K (102 aa).

The next 3 membrane-spanning stretches (helical) occupy residues 6–26 (MEHG…GLMV), 30–50 (ILFV…AFVV), and 62–82 (IMFI…LAIL).

The protein belongs to the complex I subunit 4L family. NDH-1 is composed of 13 different subunits. Subunits NuoA, H, J, K, L, M, N constitute the membrane sector of the complex.

It is found in the cell inner membrane. The enzyme catalyses a quinone + NADH + 5 H(+)(in) = a quinol + NAD(+) + 4 H(+)(out). NDH-1 shuttles electrons from NADH, via FMN and iron-sulfur (Fe-S) centers, to quinones in the respiratory chain. The immediate electron acceptor for the enzyme in this species is believed to be ubiquinone. Couples the redox reaction to proton translocation (for every two electrons transferred, four hydrogen ions are translocated across the cytoplasmic membrane), and thus conserves the redox energy in a proton gradient. This is NADH-quinone oxidoreductase subunit K from Azotobacter vinelandii (strain DJ / ATCC BAA-1303).